Here is a 706-residue protein sequence, read N- to C-terminus: MFDKHVKTFQYGNQTVTLETGEIARQAAAAVKVSMGDTVVLVAVTTNKEVKEGQDFFPLTVDYLERTYAAGKIPGGFFKREGKQSEKEILTSRLIDRPIRPLFPEGFYHDIQIVAMVVSVDPEIDSDIPAMLGASAALVLSGVPFAGPIGAARVGYINGVYVLNPTKAELAKSQLDLVVAGTSKAVLMVESEAKILPEDVMLGAVVYGHDQMQVAINAINEFADEVNPELWDWKAPETNEELVAKVRGIAGETIKEAFKIRQKQARSAKLDEAWSAVKEALITEETDTLAANEIKGIFKHLEADVVRSQILDGQPRIDGRDTRTVRPLNIQTGVLPRTHGSALFTRGETQALAVATLGTSRDEQIIDALSGEYTDRFMLHYNFPPYSTGEVGRMGAPKRREIGHGRLAKRALLAVLPKPEDFSYTMRVVSEITESNGSSSMASVCGGCLSLLSAGVPLKAHVAGIAMGLILEGNKFAVLTDILGDEDHLGDMDFKVAGTTEGVTALQMDIKIQGITKEIMQIALAQAKEARLHILDQMKAAVAGPQELSAHAPRLFTMKINQDKIREVIGKGGETIRAITAETGTEINIAEDGTITIAATTQEAGDAAKKRIEQITAEVEVGKVYEGTVVKILDNNVGAIVSVMPGKDGLVHISQIAHERVRNVGDYLQVGQVVNVKALEVDDRGRVRLSIKALLDAPAREENAAE.

Mg(2+)-binding residues include Asp-487 and Asp-493. Residues 553–612 (PRLFTMKINQDKIREVIGKGGETIRAITAETGTEINIAEDGTITIAATTQEAGDAAKKRI) enclose the KH domain. Residues 622–692 (GKVYEGTVVK…DRGRVRLSIK (71 aa)) form the S1 motif domain.

This sequence belongs to the polyribonucleotide nucleotidyltransferase family. Mg(2+) is required as a cofactor.

It is found in the cytoplasm. It catalyses the reaction RNA(n+1) + phosphate = RNA(n) + a ribonucleoside 5'-diphosphate. Involved in mRNA degradation. Catalyzes the phosphorolysis of single-stranded polyribonucleotides processively in the 3'- to 5'-direction. The protein is Polyribonucleotide nucleotidyltransferase of Neisseria meningitidis serogroup A / serotype 4A (strain DSM 15465 / Z2491).